We begin with the raw amino-acid sequence, 341 residues long: GTPase Obg (341 aa).

The Obg domain occupies 1-159 (MKFVDEALIK…RNLRLELRVL (159 aa)). Residues 128–150 (TRYKSSVNRSPRQTTPGSPGESR) are disordered. A compositionally biased stretch (polar residues) spans 129 to 144 (RYKSSVNRSPRQTTPG). The OBG-type G domain maps to 160 to 334 (ADVGLLGLPN…LCYALMQLID (175 aa)). GTP-binding positions include 166–173 (GLPNAGKS), 191–195 (FTTLH), 213–216 (DIPG), 283–286 (NKID), and 315–317 (SAI). Mg(2+) contacts are provided by serine 173 and threonine 193.

It belongs to the TRAFAC class OBG-HflX-like GTPase superfamily. OBG GTPase family. Monomer. It depends on Mg(2+) as a cofactor.

It is found in the cytoplasm. An essential GTPase which binds GTP, GDP and possibly (p)ppGpp with moderate affinity, with high nucleotide exchange rates and a fairly low GTP hydrolysis rate. Plays a role in control of the cell cycle, stress response, ribosome biogenesis and in those bacteria that undergo differentiation, in morphogenesis control. This chain is GTPase Obg, found in Legionella pneumophila (strain Lens).